The following is a 229-amino-acid chain: LexA repressor (229 aa).

Residues I28–K48 constitute a DNA-binding region (H-T-H motif). Catalysis depends on for autocatalytic cleavage activity residues S147 and K184.

Belongs to the peptidase S24 family. In terms of assembly, homodimer.

The catalysed reaction is Hydrolysis of Ala-|-Gly bond in repressor LexA.. Functionally, represses a number of genes involved in the response to DNA damage (SOS response), including recA and lexA. In the presence of single-stranded DNA, RecA interacts with LexA causing an autocatalytic cleavage which disrupts the DNA-binding part of LexA, leading to derepression of the SOS regulon and eventually DNA repair. The polypeptide is LexA repressor (Anaeromyxobacter dehalogenans (strain 2CP-C)).